We begin with the raw amino-acid sequence, 119 residues long: Beta-2-microglobulin (119 aa).

The signal sequence occupies residues 1–20 (MARFVVVPLLVLLSLFGLEA). The Ig-like C1-type domain occupies 25–114 (PKIQVYSRYP…VTFSTPKTVK (90 aa)). A disulfide bridge connects residues Cys45 and Cys100.

The protein belongs to the beta-2-microglobulin family. As to quaternary structure, heterodimer of an alpha chain and a beta chain. Beta-2-microglobulin is the beta-chain of major histocompatibility complex class I molecules.

The protein resides in the secreted. In terms of biological role, component of the class I major histocompatibility complex (MHC). Involved in the presentation of peptide antigens to the immune system. This is Beta-2-microglobulin (B2M) from Saguinus bicolor bicolor (Pied bare-faced tamarin).